We begin with the raw amino-acid sequence, 671 residues long: Acetyl-coenzyme A synthetase (671 aa).

A disordered region spans residues 1 to 21; sequence MPTASASESSSNQPESSNASG. CoA is bound by residues 221-224, T339, and N363; that span reads RRGK. ATP contacts are provided by residues 415-417, 439-444, D528, and R543; these read GEG and DTWWQT. S551 provides a ligand contact to CoA. Position 554 (R554) interacts with ATP. Residues V565, H567, and V570 each contribute to the Mg(2+) site. A CoA-binding site is contributed by R611. K636 is subject to N6-acetyllysine.

Belongs to the ATP-dependent AMP-binding enzyme family. Mg(2+) is required as a cofactor. Post-translationally, acetylated. Deacetylation by the SIR2-homolog deacetylase activates the enzyme.

It carries out the reaction acetate + ATP + CoA = acetyl-CoA + AMP + diphosphate. In terms of biological role, catalyzes the conversion of acetate into acetyl-CoA (AcCoA), an essential intermediate at the junction of anabolic and catabolic pathways. AcsA undergoes a two-step reaction. In the first half reaction, AcsA combines acetate with ATP to form acetyl-adenylate (AcAMP) intermediate. In the second half reaction, it can then transfer the acetyl group from AcAMP to the sulfhydryl group of CoA, forming the product AcCoA. This chain is Acetyl-coenzyme A synthetase, found in Rhodopirellula baltica (strain DSM 10527 / NCIMB 13988 / SH1).